Reading from the N-terminus, the 344-residue chain is Methylthioribose-1-phosphate isomerase (344 aa).

Residues 55 to 57 (RGA), R98, and Q202 each bind substrate. D243 functions as the Proton donor in the catalytic mechanism. Position 253 to 254 (253 to 254 (NK)) interacts with substrate.

The protein belongs to the eIF-2B alpha/beta/delta subunits family. MtnA subfamily.

The catalysed reaction is 5-(methylsulfanyl)-alpha-D-ribose 1-phosphate = 5-(methylsulfanyl)-D-ribulose 1-phosphate. The protein operates within amino-acid biosynthesis; L-methionine biosynthesis via salvage pathway; L-methionine from S-methyl-5-thio-alpha-D-ribose 1-phosphate: step 1/6. Catalyzes the interconversion of methylthioribose-1-phosphate (MTR-1-P) into methylthioribulose-1-phosphate (MTRu-1-P). This chain is Methylthioribose-1-phosphate isomerase, found in Gemmatimonas aurantiaca (strain DSM 14586 / JCM 11422 / NBRC 100505 / T-27).